A 574-amino-acid polypeptide reads, in one-letter code: MLREFSKWGVEASPGKAWERKRSLLRGAVGRYRGATGGDLFWAPFPSWGTMEFPEHSQQLLQSLREQRSQGFLCDCTVMVGSTQFLAHRAVLASCSPFFQLFYKERELDKRDLVCIHNEIVTAPAFGLLLDFMYAGQLTLRGDTPVEDVLAAASYLHMNDIVKVCKRRLQARALAEADSTKKEEETNSQLPSLEFLSSTSRGTQPSLASAETSGHWGKGEWKGSAAPSPTVRPPDEPPMSSGADTTQPGMEVDAPHLRAPHPPVADVSLASPSSSTETIPTNYFSSGISAVSLEPLPSLDVGPESLRVVEPKDPGGPLQGFYPPASAPTSAPAPVSAPVPSQAPAPAEAELVQVKVEAIVISDEETDVSDEQPQGPERAFPSGGAVYGAQPSQPEAFEDPGAAGLEEVGPSDHFLPTDPHLPYHLLPGAGQYHRGLVTSPLPAPASLHEPLYLSSEYEAAPGSFGVFTEDVPTCKTCGKTFSCSYTLRRHATVHTRERPYECRYCLRSYTQSGDLYRHIRKAHNEDLAKRSKPDPEVGPLLGVQPLPGSPTADRQSSSGGGPPKDFVLAPKTNI.

The region spanning 74–142 (CDCTVMVGST…MYAGQLTLRG (69 aa)) is the BTB domain. Disordered stretches follow at residues 175–277 (AEAD…SSTE) and 305–346 (SLRV…APAP). Glycyl lysine isopeptide (Lys-Gly) (interchain with G-Cter in SUMO2) cross-links involve residues Lys181 and Lys182. Residues 187–212 (NSQLPSLEFLSSTSRGTQPSLASAET) are compositionally biased toward polar residues. A compositionally biased stretch (low complexity) spans 323-334 (PPASAPTSAPAP). Ser362 bears the Phosphoserine mark. A disordered region spans residues 364–403 (EETDVSDEQPQGPERAFPSGGAVYGAQPSQPEAFEDPGAA). C2H2-type zinc fingers lie at residues 472-494 (PTCK…ATVH) and 500-523 (YECR…RKAH). The segment covering 526–535 (DLAKRSKPDP) has biased composition (basic and acidic residues). The tract at residues 526-574 (DLAKRSKPDPEVGPLLGVQPLPGSPTADRQSSSGGGPPKDFVLAPKTNI) is disordered. Lys532 participates in a covalent cross-link: Glycyl lysine isopeptide (Lys-Gly) (interchain with G-Cter in SUMO2). The residue at position 549 (Ser549) is a Phosphoserine.

The protein localises to the nucleus. In terms of biological role, may be involved in transcriptional regulation. The chain is Zinc finger and BTB domain-containing protein 3 (ZBTB3) from Homo sapiens (Human).